The sequence spans 141 residues: ATP synthase epsilon chain, chloroplastic (141 aa).

The protein belongs to the ATPase epsilon chain family. F-type ATPases have 2 components, F(1) - the catalytic core - and F(0) - the membrane proton channel. F(1) has five subunits: alpha(3), beta(3), gamma(1), delta(1), epsilon(1). F(0) has four main subunits: a(1), b(1), b'(1) and c(10-14). The alpha and beta chains form an alternating ring which encloses part of the gamma chain. F(1) is attached to F(0) by a central stalk formed by the gamma and epsilon chains, while a peripheral stalk is formed by the delta, b and b' chains.

It is found in the plastid. Its subcellular location is the chloroplast thylakoid membrane. F(1)F(0) ATP synthase produces ATP from ADP in the presence of a proton or sodium gradient. F-type ATPases consist of two structural domains, F(1) containing the extramembraneous catalytic core and F(0) containing the membrane proton channel, linked together by a central stalk and a peripheral stalk. During catalysis, ATP synthesis in the catalytic domain of F(1) is coupled via a rotary mechanism of the central stalk subunits to proton translocation. The sequence is that of ATP synthase epsilon chain, chloroplastic from Chlamydomonas reinhardtii (Chlamydomonas smithii).